The chain runs to 353 residues: Uroporphyrinogen decarboxylase (353 aa).

Residues 28–32 (RQAGR), Asp78, Tyr155, Ser210, and His325 each bind substrate.

Belongs to the uroporphyrinogen decarboxylase family. Homodimer.

It is found in the cytoplasm. It catalyses the reaction uroporphyrinogen III + 4 H(+) = coproporphyrinogen III + 4 CO2. It participates in porphyrin-containing compound metabolism; protoporphyrin-IX biosynthesis; coproporphyrinogen-III from 5-aminolevulinate: step 4/4. Functionally, catalyzes the decarboxylation of four acetate groups of uroporphyrinogen-III to yield coproporphyrinogen-III. In Nostoc punctiforme (strain ATCC 29133 / PCC 73102), this protein is Uroporphyrinogen decarboxylase.